Reading from the N-terminus, the 451-residue chain is UPF0210 protein LMOf2365_0563 (451 aa).

Belongs to the UPF0210 family. In terms of assembly, homodimer.

The polypeptide is UPF0210 protein LMOf2365_0563 (Listeria monocytogenes serotype 4b (strain F2365)).